The chain runs to 349 residues: Protein AMBP (349 aa).

The signal sequence occupies residues 1–19; the sequence is MQGLRTLFLLLTACLASRA. N-linked (GlcNAc...) asparagine glycosylation occurs at asparagine 33. 2 residues coordinate 3-hydroxy-L-kynurenine: cysteine 52 and lysine 110. An intrachain disulfide couples cysteine 90 to cysteine 187. Asparagine 114 is a glycosylation site (N-linked (GlcNAc...) asparagine). 2 residues coordinate 3-hydroxy-L-kynurenine: lysine 136 and lysine 148. Serine 214 carries O-linked (Xyl...) (chondroitin sulfate) serine glycosylation. Intrachain disulfides connect cysteine 230/cysteine 280, cysteine 239/cysteine 263, cysteine 255/cysteine 276, cysteine 286/cysteine 336, cysteine 295/cysteine 319, and cysteine 311/cysteine 332. BPTI/Kunitz inhibitor domains follow at residues 230 to 280 and 286 to 336; these read CQLN…LQTC and CNLP…KEYC. N-linked (GlcNAc...) asparagine glycosylation occurs at asparagine 233.

In the N-terminal section; belongs to the calycin superfamily. Lipocalin family. As to quaternary structure, monomer. Homodimer. In plasma, it occurs as a monomer or dimer and in covalently-linked complexes with immunoglobulin A (IgA), ALB/albumin and F2/prothrombin. Chromophore-bound alpha-1-microglobulin interacts with the constant region of immunoglobulin A. Chromophore-bound alpha-1-microglobulin interacts with ALB with molar ratio 2:1 and 1:1; this interaction does not prevent fatty acid binding to ALB. Interacts with F2/prothrombin (via N-terminus) with molar ratio 2:1 and 1:1; this interaction does not prevent the activation of prothrombin to thrombin. Interacts with NDUFAB1, a subunit of mitochondrial complex I. Interacts with FN1. I-alpha-I plasma protease inhibitors are assembled from one or two heavy chains (HC) and one light chain, bikunin. Inter-alpha-inhibitor (I-alpha-I) is composed of ITIH1/HC1, ITIH2/HC2 and bikunin, and pre-alpha-inhibitor (P-alpha-I) of ITIH3/HC3 and bikunin. Interacts with TNFAIP6 (via Link domain). In terms of assembly, monomer. Also occurs as a complex with tryptase in mast cells. In terms of processing, the precursor is proteolytically processed into separately functioning proteins. 3-hydroxykynurenine, an oxidized tryptophan metabolite that is common in biological fluids, reacts with Cys-53, Lys-111, Lys-137, and Lys-149 to form heterogeneous polycyclic chromophores including hydroxanthommatin. The reaction by alpha-1-microglobulin is autocatalytic; the human protein forms chromophore even when expressed in insect and bacterial cells. The chromophore can react with accessible cysteines forming non-reducible thioether cross-links with other molecules of alpha-1-microglobulin or with other proteins such as Ig alpha-1 chain C region 'Cys-352'. Post-translationally, heavy chains are interlinked with bikunin via a chondroitin 4-sulfate bridge to the C-terminal aspartate. In terms of processing, proteolytically cleaved by PRSS3 at Kunitz domain 2. In terms of tissue distribution, expressed by the liver and secreted in plasma (at protein level).

The protein resides in the secreted. The protein localises to the endoplasmic reticulum. It is found in the cytoplasm. Its subcellular location is the cytosol. It localises to the cell membrane. The protein resides in the nucleus membrane. The protein localises to the mitochondrion inner membrane. It is found in the extracellular space. Its subcellular location is the extracellular matrix. Functionally, antioxidant and tissue repair protein with reductase, heme-binding and radical-scavenging activities. Removes and protects against harmful oxidants and repairs macromolecules in intravascular and extravascular spaces and in intracellular compartments. Intravascularly, plays a regulatory role in red cell homeostasis by preventing heme- and reactive oxygen species-induced cell damage. Binds and degrades free heme to protect fetal and adult red blood cells from hemolysis. Reduces extracellular methemoglobin, a Fe3+ (ferric) form of hemoglobin that cannot bind oxygen, back to the Fe2+ (ferrous) form deoxyhemoglobin, which has oxygen-carrying potential. Upon acute inflammation, inhibits oxidation of low-density lipoprotein particles by MPO and limits vascular damage. Extravascularly, protects from oxidation products formed on extracellular matrix structures and cell membranes. Catalyzes the reduction of carbonyl groups on oxidized collagen fibers and preserves cellular and extracellular matrix ultrastructures. Importantly, counteracts the oxidative damage at blood-placenta interface, preventing leakage of free fetal hemoglobin into the maternal circulation. Intracellularly, has a role in maintaining mitochondrial redox homeostasis. Bound to complex I of the respiratory chain of mitochondria, may scavenge free radicals and preserve mitochondrial ATP synthesis. Protects renal tubule epithelial cells from heme-induced oxidative damage to mitochondria. Reduces cytochrome c from Fe3+ (ferric) to the Fe2+ (ferrous) state through formation of superoxide anion radicals in the presence of ascorbate or NADH/NADPH electron donor cofactors, ascorbate being the preferred cofactor. Has a chaperone role in facilitating the correct folding of bikunin in the endoplasmic reticulum compartment. In terms of biological role, kunitz-type serine protease inhibitor and structural component of extracellular matrix with a role in extracellular space remodeling and cell adhesion. Among others, has antiprotease activity toward kallikrein, a protease involved in airway inflammation; inhibits GZMK/granzyme, a granule-stored serine protease involved in NK and T cell cytotoxic responses; and inhibits PLG/plasmin, a protease required for activation of matrix metalloproteinases. As part of I-alpha-I complex, provides for the heavy chains to be transferred from I-alpha-I complex to hyaluronan in the presence of TNFAIP6, in a dynamic process that releases free bikunin and remodels extracellular matrix proteoglycan structures. Free bikunin, but not its heavy chain-bound form, acts as a potent protease inhibitor in airway secretions. Part of hyaluronan-rich extracellular matrix that surrounds oocyte during cumulus oophorus expansion, an indispensable process for proper ovulation. Also inhibits calcium oxalate crystallization. Kunitz-type serine protease inhibitor. Has high catalytic efficiency for F10/blood coagulation factor Xa and may act as an anticoagulant by inhibiting prothrombin activation. Inhibits trypsin and mast cell CMA1/chymase and tryptase proteases. This is Protein AMBP (Ambp) from Mus musculus (Mouse).